The sequence spans 341 residues: Probable dual-specificity RNA methyltransferase RlmN (341 aa).

The active-site Proton acceptor is Glu88. Residues 94–314 (EGDRATLCIS…ESHGFTCTIR (221 aa)) enclose the Radical SAM core domain. Cys101 and Cys325 are joined by a disulfide. Positions 108, 112, and 115 each coordinate [4Fe-4S] cluster. S-adenosyl-L-methionine is bound by residues 153 to 154 (GE), Ser185, 206 to 208 (SLH), and His282. The active-site S-methylcysteine intermediate is Cys325.

It belongs to the radical SAM superfamily. RlmN family. The cofactor is [4Fe-4S] cluster.

Its subcellular location is the cytoplasm. The catalysed reaction is adenosine(2503) in 23S rRNA + 2 reduced [2Fe-2S]-[ferredoxin] + 2 S-adenosyl-L-methionine = 2-methyladenosine(2503) in 23S rRNA + 5'-deoxyadenosine + L-methionine + 2 oxidized [2Fe-2S]-[ferredoxin] + S-adenosyl-L-homocysteine. The enzyme catalyses adenosine(37) in tRNA + 2 reduced [2Fe-2S]-[ferredoxin] + 2 S-adenosyl-L-methionine = 2-methyladenosine(37) in tRNA + 5'-deoxyadenosine + L-methionine + 2 oxidized [2Fe-2S]-[ferredoxin] + S-adenosyl-L-homocysteine. Its function is as follows. Specifically methylates position 2 of adenine 2503 in 23S rRNA and position 2 of adenine 37 in tRNAs. The polypeptide is Probable dual-specificity RNA methyltransferase RlmN (Porphyromonas gingivalis (strain ATCC BAA-308 / W83)).